The sequence spans 435 residues: Methylenetetrahydrofolate--tRNA-(uracil-5-)-methyltransferase TrmFO (435 aa).

An FAD-binding site is contributed by 9–14 (GAGLAG).

It belongs to the MnmG family. TrmFO subfamily. Requires FAD as cofactor.

The protein localises to the cytoplasm. The catalysed reaction is uridine(54) in tRNA + (6R)-5,10-methylene-5,6,7,8-tetrahydrofolate + NADH + H(+) = 5-methyluridine(54) in tRNA + (6S)-5,6,7,8-tetrahydrofolate + NAD(+). The enzyme catalyses uridine(54) in tRNA + (6R)-5,10-methylene-5,6,7,8-tetrahydrofolate + NADPH + H(+) = 5-methyluridine(54) in tRNA + (6S)-5,6,7,8-tetrahydrofolate + NADP(+). Its function is as follows. Catalyzes the folate-dependent formation of 5-methyl-uridine at position 54 (M-5-U54) in all tRNAs. This chain is Methylenetetrahydrofolate--tRNA-(uracil-5-)-methyltransferase TrmFO, found in Staphylococcus aureus (strain MRSA252).